A 57-amino-acid chain; its full sequence is UPF0391 membrane protein Smed_4051 (57 aa).

2 consecutive transmembrane segments (helical) span residues 4-24 (WALIFFVISLIAGFLGFSGIS) and 33-53 (ILFYIAVIIFLVFLVLALAVG).

It belongs to the UPF0391 family.

The protein resides in the cell membrane. This is UPF0391 membrane protein Smed_4051 from Sinorhizobium medicae (strain WSM419) (Ensifer medicae).